The chain runs to 348 residues: Phosphoribosylformylglycinamidine cyclo-ligase (348 aa).

The protein belongs to the AIR synthase family.

It localises to the cytoplasm. The enzyme catalyses 2-formamido-N(1)-(5-O-phospho-beta-D-ribosyl)acetamidine + ATP = 5-amino-1-(5-phospho-beta-D-ribosyl)imidazole + ADP + phosphate + H(+). Its pathway is purine metabolism; IMP biosynthesis via de novo pathway; 5-amino-1-(5-phospho-D-ribosyl)imidazole from N(2)-formyl-N(1)-(5-phospho-D-ribosyl)glycinamide: step 2/2. The polypeptide is Phosphoribosylformylglycinamidine cyclo-ligase (Cereibacter sphaeroides (strain KD131 / KCTC 12085) (Rhodobacter sphaeroides)).